A 372-amino-acid polypeptide reads, in one-letter code: 3-dehydroquinate synthase (372 aa).

Residues 116 to 120 (GVVGD), 140 to 141 (TT), Lys-153, Lys-162, and 180 to 183 (TLKT) contribute to the NAD(+) site. 3 residues coordinate Zn(2+): Glu-195, His-260, and His-277.

The protein belongs to the sugar phosphate cyclases superfamily. Dehydroquinate synthase family. The cofactor is NAD(+). Requires Co(2+) as cofactor. Zn(2+) serves as cofactor.

It is found in the cytoplasm. The catalysed reaction is 7-phospho-2-dehydro-3-deoxy-D-arabino-heptonate = 3-dehydroquinate + phosphate. The protein operates within metabolic intermediate biosynthesis; chorismate biosynthesis; chorismate from D-erythrose 4-phosphate and phosphoenolpyruvate: step 2/7. In terms of biological role, catalyzes the conversion of 3-deoxy-D-arabino-heptulosonate 7-phosphate (DAHP) to dehydroquinate (DHQ). This is 3-dehydroquinate synthase from Prochlorococcus marinus (strain MIT 9313).